Consider the following 234-residue polypeptide: Small ribosomal subunit protein uS3 (234 aa).

A KH type-2 domain is found at 39–107 (IRKFLKKELY…EVSINIKEVK (69 aa)).

This sequence belongs to the universal ribosomal protein uS3 family. As to quaternary structure, part of the 30S ribosomal subunit. Forms a tight complex with proteins S10 and S14.

Binds the lower part of the 30S subunit head. Binds mRNA in the 70S ribosome, positioning it for translation. This Helicobacter pylori (strain G27) protein is Small ribosomal subunit protein uS3.